The primary structure comprises 218 residues: UPF0502 protein CJA_1529 (218 aa).

The protein belongs to the UPF0502 family.

This Cellvibrio japonicus (strain Ueda107) (Pseudomonas fluorescens subsp. cellulosa) protein is UPF0502 protein CJA_1529.